The following is a 208-amino-acid chain: MTGKKRSASSSRWLQEHFSDKYVQQAQKKGLRSRAWFKLDEIQQSDKLFKPGMTVVDLGAAPGGWSQYVVTQIGGKGRIIACDLLPMDPIVGVDFLQGDFRDELVMKALLERVGDSKVQVVMSDMAPNMSGTPAVDIPRAMYLVELALDMCRDVLAPGGSFVVKVFQGEGFDEYLREIRSLFTKVKVRKPDSSRARSREVYIVATGRK.

S-adenosyl-L-methionine is bound by residues G63, W65, D83, D99, and D124. The active-site Proton acceptor is the K164.

It belongs to the class I-like SAM-binding methyltransferase superfamily. RNA methyltransferase RlmE family.

It is found in the cytoplasm. The catalysed reaction is uridine(2552) in 23S rRNA + S-adenosyl-L-methionine = 2'-O-methyluridine(2552) in 23S rRNA + S-adenosyl-L-homocysteine + H(+). Its function is as follows. Specifically methylates the uridine in position 2552 of 23S rRNA at the 2'-O position of the ribose in the fully assembled 50S ribosomal subunit. This chain is Ribosomal RNA large subunit methyltransferase E, found in Salmonella typhi.